Consider the following 470-residue polypeptide: Mucin-like protein 3 (470 aa).

The signal sequence occupies residues 1–29 (MAQMTSGLYPMFGFFICLLFLPASWEAGA). At 30–401 (NTFQELQKTG…EGSNSFPAWA (372 aa)) the chain is on the extracellular side. Disordered regions lie at residues 57–234 (RALS…HTIP) and 248–318 (TKEA…KAPE). The segment covering 75–87 (STATQKPKRQCNT) has biased composition (polar residues). The N-linked (GlcNAc...) asparagine glycan is linked to N122. A compositionally biased stretch (basic and acidic residues) spans 132–152 (ARNERSADDHGSTNSEKRSDG). Polar residues predominate over residues 169-193 (TRTSGTPVSSTETSTKLRTTSQKPE). Residues 194–203 (TSSHDSDLIR) are compositionally biased toward basic and acidic residues. Residues 204–222 (KSTSLPVKSTEVSRTSYRT) are compositionally biased toward polar residues. Over residues 260-273 (KYERETRSASERIS) the composition is skewed to basic and acidic residues. Residues 283–295 (HTPSAGETTTQVS) are compositionally biased toward polar residues. N325 carries an N-linked (GlcNAc...) asparagine glycan. Residues 402 to 422 (IVVVILMAVIILLIFLGLIFL) form a helical membrane-spanning segment. The Cytoplasmic segment spans residues 423–470 (VSCASRARHQLTQNSEDAEPEDKGGRNSYPVYLMEQQNLNLNQISSPP).

Its subcellular location is the cell membrane. The protein resides in the cytoplasm. Functionally, may modulate NF-kappaB signaling and play a role in cell growth. In Rattus norvegicus (Rat), this protein is Mucin-like protein 3.